A 586-amino-acid chain; its full sequence is Alanine racemase ungC (586 aa).

Residues 187-206 (RVGALPAAASTASPMGSSLP) are disordered. The span at 196–206 (STASPMGSSLP) shows a compositional bias: polar residues.

This sequence belongs to the trans-sulfuration enzymes family. Requires pyridoxal 5'-phosphate as cofactor.

It catalyses the reaction L-alanine = D-alanine. It functions in the pathway secondary metabolite biosynthesis. In terms of biological role, alanine racemase; part of the gene cluster that mediates the biosynthesis of the unguisins, gamma-aminobutyric acid (GABA)-containing fungal cyclic heptapeptides with the amino acid sequence cyclo-(D-Ala1-D-Val2-L-Phe3-D-Val4-D-Ala5-D-Trp6-GABA7) for unguisin A and cyclo-(D-Ala1-D-Val2-L-Leu3-D-Val4-D-Ala5-D-Trp6-GABA7) for unguisin B. Within the pathway, the alanine racemase ungC catalyzes the interconversion of L-alanine and D-alanine, providing the D-alanine which is accepted by the first adenylation domain of the nonribosomal peptide synthetase (NRPS) ungA. UngA is the main enzyme within the cluster which condenses the 7 residues using its respective 7 modules. The terminal condensation domain (Ct) is involved in cyclization with D-alanine and thereby releasing of unguisins A and B. Finally, the hydrolase ungD catalyzes the hydrolysis between the D-tryptophan and GABA residues of unguisins A and B to produce the corresponding linear peptides. This Aspergillus violaceofuscus (strain CBS 115571) protein is Alanine racemase ungC.